Reading from the N-terminus, the 329-residue chain is MSMVEENRPFAQQLSNVYFTILSLFCFKLFVKISLAILSHFYIVKGNRKEAARIAAEFYGVTQGRGSWADRSPLHEAASQGRLLALRTLLSQGYNVNAVTIDHVTPLHEACLGDHVACARTLLQAGANVNAITIDGVTPLFNACSQGSTSCTELLLEYGAKPQLESCLPSPTHEAASKGHHECLEILISWGVDVDQDIPHLGTPLYVACMSQQFHCVRKLLYAGADVQKGKYWDTPLHAAAQQSCTEIVNLLLEFGADINAKNTDLLRPVDVATSNSLVERLLLQHEATPSSLCQLCRLCIRNYIGRPRLHLIPQLQLPTLLQNFLQYR.

6 ANK repeats span residues 69 to 98, 102 to 131, 135 to 164, 167 to 196, 200 to 229, and 232 to 261; these read ADRS…NVNA, DHVT…NVNA, DGVT…KPQL, CLPS…DVDQ, HLGT…DVQK, and YWDT…DINA. The 52-residue stretch at 278–329 folds into the SOCS box domain; the sequence is LVERLLLQHEATPSSLCQLCRLCIRNYIGRPRLHLIPQLQLPTLLQNFLQYR.

The protein belongs to the ankyrin SOCS box (ASB) family.

The protein operates within protein modification; protein ubiquitination. May be a substrate-recognition component of a SCF-like ECS (Elongin-Cullin-SOCS-box protein) E3 ubiquitin-protein ligase complex which mediates the ubiquitination and subsequent proteasomal degradation of target proteins. May play a role in the initiation of arteriogenesis. The polypeptide is Ankyrin repeat and SOCS box protein 5 (ASB5) (Bos taurus (Bovine)).